Here is a 255-residue protein sequence, read N- to C-terminus: 5'-nucleotidase SurE (255 aa).

Residues aspartate 8, aspartate 9, serine 40, and asparagine 93 each contribute to the a divalent metal cation site.

The protein belongs to the SurE nucleotidase family. The cofactor is a divalent metal cation.

The protein resides in the cytoplasm. The enzyme catalyses a ribonucleoside 5'-phosphate + H2O = a ribonucleoside + phosphate. In terms of biological role, nucleotidase that shows phosphatase activity on nucleoside 5'-monophosphates. This Rhodopseudomonas palustris (strain HaA2) protein is 5'-nucleotidase SurE.